A 410-amino-acid polypeptide reads, in one-letter code: Neurotensin receptor type 2 (410 aa).

The Extracellular portion of the chain corresponds to 1-32 (METSSPRPPRPSSNPGLSLDARLGVDTRLWAK). A helical membrane pass occupies residues 33-55 (VLFTALYALIWALGAAGNALSAH). Over 56 to 64 (VVLKARAGR) the chain is Cytoplasmic. The chain crosses the membrane as a helical span at residues 65 to 87 (AGRLRHHVLSLALAGLLLLLVGV). At 88–109 (PVELYSFVWFHYPWVFGDLGCR) the chain is on the extracellular side. A disulfide bridge links Cys108 with Cys194. A helical membrane pass occupies residues 110 to 131 (GYYFVHELCAYATVLSVAGLSA). Residues 132–154 (ERCLAVCQPLRARSLLTPRRTRW) are Cytoplasmic-facing. A helical transmembrane segment spans residues 155-176 (LVALSWAASLGLALPMAVIMGQ). At 177 to 217 (KHELETADGEPEPASRVCTVLVSRTALQVFIQVNVLVSFVL) the chain is on the extracellular side. A helical transmembrane segment spans residues 218–237 (PLALTAFLNGVTVSHLLALC). Residues 238–297 (SQVPSTSTPGSSTPSRLELLSEEGLLSFIVWKKTFIQGGQVSLVRHKDVRRIRSLQRSVQ) are Cytoplasmic-facing. Residues 298 to 318 (VLRAIVVMYVICWLPYHARRL) form a helical membrane-spanning segment. At 319-337 (MYCYVPDDAWTDPLYNFYH) the chain is on the extracellular side. The helical transmembrane segment at 338 to 358 (YFYMVTNTLFYVSSAVTPLLY) threads the bilayer. Residues 359–410 (NAVSSSFRKLFLEAVSSLCGEHHPMKRLPPKPQSPTLMDTASGFGDPPETRT) are Cytoplasmic-facing. Cys377 carries the S-palmitoyl cysteine lipid modification. Residues 381–410 (HPMKRLPPKPQSPTLMDTASGFGDPPETRT) form a disordered region.

It belongs to the G-protein coupled receptor 1 family. Neurotensin receptor subfamily. NTSR2 sub-subfamily. In terms of tissue distribution, expressed in prostate (at protein level).

Its subcellular location is the cell membrane. Functionally, receptor for the tridecapeptide neurotensin. It is associated with G proteins that activate a phosphatidylinositol-calcium second messenger system. This is Neurotensin receptor type 2 (NTSR2) from Homo sapiens (Human).